Consider the following 232-residue polypeptide: Protein FAM228B (232 aa).

This sequence belongs to the FAM228 family.

The polypeptide is Protein FAM228B (Fam228b) (Mus musculus (Mouse)).